Consider the following 305-residue polypeptide: Protoheme IX farnesyltransferase 1 (305 aa).

The next 8 helical transmembrane spans lie at 22–42 (IKTG…TLAL), 53–73 (IPEI…AGAF), 94–114 (VTGD…TIFG), 115–135 (LVFL…GLFL), 154–174 (IGSV…YPDV), 179–199 (IIGL…AIAI), 230–250 (LVIL…LMLV), and 283–303 (LFHM…GIFF).

Belongs to the UbiA prenyltransferase family. Protoheme IX farnesyltransferase subfamily. Interacts with CtaA.

It is found in the cell membrane. The enzyme catalyses heme b + (2E,6E)-farnesyl diphosphate + H2O = Fe(II)-heme o + diphosphate. The protein operates within porphyrin-containing compound metabolism; heme O biosynthesis; heme O from protoheme: step 1/1. In terms of biological role, converts heme B (protoheme IX) to heme O by substitution of the vinyl group on carbon 2 of heme B porphyrin ring with a hydroxyethyl farnesyl side group. This is Protoheme IX farnesyltransferase 1 from Bacillus cytotoxicus (strain DSM 22905 / CIP 110041 / 391-98 / NVH 391-98).